The sequence spans 292 residues: Phosphatidylglycerol--prolipoprotein diacylglyceryl transferase (292 aa).

7 helical membrane passes run 21–41 (VSLH…MWLA), 60–80 (LLYA…VLFY), 98–118 (GGMS…VFAH), 124–144 (FFQV…AGRL), 198–218 (SQLY…NLFI), 225–245 (GAVS…VEFF), and 258–278 (ISMG…MMIW). Position 143 (R143) interacts with a 1,2-diacyl-sn-glycero-3-phospho-(1'-sn-glycerol).

It belongs to the Lgt family.

The protein resides in the cell inner membrane. It catalyses the reaction L-cysteinyl-[prolipoprotein] + a 1,2-diacyl-sn-glycero-3-phospho-(1'-sn-glycerol) = an S-1,2-diacyl-sn-glyceryl-L-cysteinyl-[prolipoprotein] + sn-glycerol 1-phosphate + H(+). The protein operates within protein modification; lipoprotein biosynthesis (diacylglyceryl transfer). In terms of biological role, catalyzes the transfer of the diacylglyceryl group from phosphatidylglycerol to the sulfhydryl group of the N-terminal cysteine of a prolipoprotein, the first step in the formation of mature lipoproteins. In Erwinia tasmaniensis (strain DSM 17950 / CFBP 7177 / CIP 109463 / NCPPB 4357 / Et1/99), this protein is Phosphatidylglycerol--prolipoprotein diacylglyceryl transferase.